The primary structure comprises 1448 residues: Glutamate receptor ionotropic, NMDA 2B (1448 aa).

An N-terminal signal peptide occupies residues 1-24 (MRPTEACCYLKISLIILFYMGCYA). At 25–554 (QKHPNMDIAV…SAFLEPFSAD (530 aa)) the chain is on the extracellular side. Residues Cys81 and Cys316 are joined by a disulfide bond. Positions 122 and 279 each coordinate Zn(2+). Residue Asn336 is glycosylated (N-linked (GlcNAc...) asparagine). 2 cysteine pairs are disulfide-bonded: Cys426-Cys453 and Cys433-Cys454. 2 residues coordinate L-glutamate: Thr511 and Arg516. A helical membrane pass occupies residues 555–573 (VWVMMFVMLLIVSAVAVFV). At 574–600 (FEYFSPVGYNRCLADGREPGGPSFTIG) the chain is on the cytoplasmic side. The discontinuously helical intramembrane region spans 601 to 620 (KAIWLLWGLVFNNSVPVQNP). The pore-forming stretch occupies residues 601–620 (KAIWLLWGLVFNNSVPVQNP). Over 621 to 627 (KGTTSKI) the chain is Cytoplasmic. Residues 628–643 (MVSVWAFFAVIFLASY) form a helical membrane-spanning segment. Residues 644 to 819 (TANLAAFMIQ…LDIDNMAGVF (176 aa)) are Extracellular-facing. The N-linked (GlcNAc...) asparagine glycan is linked to Asn685. L-glutamate is bound by residues 687–688 (ST) and Asp729. Residues Cys743 and Cys798 are joined by a disulfide bond. Residues 820-839 (YMLAAAMALSLITFIMEHLF) form a helical membrane-spanning segment. Residues 840–1448 (FWQLRHCFMG…EKLSSIESDV (609 aa)) are Cytoplasmic-facing. Over residues 1254–1265 (APNSKYPQSPNG) the composition is skewed to polar residues. Residues 1254–1277 (APNSKYPQSPNGKAQKRNRSKLHR) are disordered. Over residues 1267 to 1277 (AQKRNRSKLHR) the composition is skewed to basic residues.

It belongs to the glutamate-gated ion channel (TC 1.A.10.1) family. NR2B/GRIN2B subfamily. In terms of assembly, heterotetramer. Forms heterotetrameric channels composed of two GluN1/zeta subunits (GRIN1), and two identical GluN2/epsilon subunits (GRIN2A, GRIN2B, GRIN2C or GRIN2D) or GluN3 subunits (GRIN3A or GRIN3B) (in vitro). In vivo, the subunit composition may depend on the expression levels of the different subunits. Detected in oocytes.

The protein localises to the cell membrane. It is found in the postsynaptic cell membrane. It catalyses the reaction Ca(2+)(in) = Ca(2+)(out). It carries out the reaction Na(+)(in) = Na(+)(out). The catalysed reaction is K(+)(in) = K(+)(out). In terms of biological role, component of N-methyl-D-aspartate (NMDA) receptors (NMDARs) that function as heterotetrameric, ligand-gated cation channels with high calcium permeability and voltage-dependent block by Mg(2+). Channel activation requires binding of the neurotransmitter L-glutamate to the GluN2 subunit, glycine binding to the GluN1 subunit, plus membrane depolarization to eliminate channel inhibition by Mg(2+). NMDARs mediate simultaneously the potasium efflux and the influx of calcium and sodium. Each GluN2 subunit confers differential attributes to channel properties, including activation, deactivation and desensitization kinetics, pH sensitivity, Ca2(+) permeability, and binding to allosteric modulators. This is Glutamate receptor ionotropic, NMDA 2B from Xenopus laevis (African clawed frog).